Here is a 73-residue protein sequence, read N- to C-terminus: Protein SlyX homolog (73 aa).

The protein belongs to the SlyX family.

The chain is Protein SlyX homolog from Haemophilus ducreyi (strain 35000HP / ATCC 700724).